Here is a 215-residue protein sequence, read N- to C-terminus: Probable phosphoglycerate mutase GpmB (215 aa).

Substrate-binding positions include 8–15 (RHGETQWN), 21–22 (QG), R58, R60, 82–85 (ELNM), 104–105 (RR), and 151–152 (GI). The active-site Tele-phosphohistidine intermediate is H9. Catalysis depends on E82, which acts as the Proton donor/acceptor.

It belongs to the phosphoglycerate mutase family. GpmB subfamily.

The enzyme catalyses (2R)-2-phosphoglycerate = (2R)-3-phosphoglycerate. The protein operates within carbohydrate degradation; glycolysis; pyruvate from D-glyceraldehyde 3-phosphate: step 3/5. The polypeptide is Probable phosphoglycerate mutase GpmB (Shigella boydii serotype 18 (strain CDC 3083-94 / BS512)).